The chain runs to 194 residues: Large ribosomal subunit protein uL6z/uL6y (194 aa).

Threonine 75 bears the Phosphothreonine mark.

This sequence belongs to the universal ribosomal protein uL6 family.

This Arabidopsis thaliana (Mouse-ear cress) protein is Large ribosomal subunit protein uL6z/uL6y (RPL9B).